The primary structure comprises 194 residues: MWLLALVVAYLIGSIPTAYVVGRYLYGFDIRRRGSGNVGATNTLRTMGTIPGLVVLGVDALKGVLAVLLGQALGGPVLVILAALMAIVGHNWSIFLEFQGGRGVATTAGALLAMAPLALFWAFLIWLAVVIFSRYISLGSIVAAAVAPFLVIYFHRPWPYVLFTFVAAALVIYRHRPNIKRLLAGTEHKLGERS.

Helical transmembrane passes span 1–21, 64–84, 112–132, 135–155, and 156–173; these read MWLL…AYVV, VLAV…LAAL, LAMA…VVIF, YISL…IYFH, and RPWP…LVIY.

Belongs to the PlsY family. In terms of assembly, probably interacts with PlsX.

Its subcellular location is the cell membrane. It carries out the reaction an acyl phosphate + sn-glycerol 3-phosphate = a 1-acyl-sn-glycero-3-phosphate + phosphate. The protein operates within lipid metabolism; phospholipid metabolism. In terms of biological role, catalyzes the transfer of an acyl group from acyl-phosphate (acyl-PO(4)) to glycerol-3-phosphate (G3P) to form lysophosphatidic acid (LPA). This enzyme utilizes acyl-phosphate as fatty acyl donor, but not acyl-CoA or acyl-ACP. This is Glycerol-3-phosphate acyltransferase 2 from Moorella thermoacetica (strain ATCC 39073 / JCM 9320).